The following is a 152-amino-acid chain: Putative aryl-alcohol dehydrogenase YFL057C (152 aa).

The protein belongs to the aldo/keto reductase family. Aldo/keto reductase 2 subfamily.

Putative aryl-alcohol dehydrogenase. The chain is Putative aryl-alcohol dehydrogenase YFL057C from Saccharomyces cerevisiae (strain ATCC 204508 / S288c) (Baker's yeast).